We begin with the raw amino-acid sequence, 117 residues long: 16 kDa protein (117 aa).

In Tobacco rattle virus (strain PLB), this protein is 16 kDa protein.